We begin with the raw amino-acid sequence, 109 residues long: Nucleoid-associated protein CGSHiEE_00780 (109 aa).

The protein belongs to the YbaB/EbfC family. As to quaternary structure, homodimer.

It localises to the cytoplasm. The protein resides in the nucleoid. Its function is as follows. Binds to DNA and alters its conformation. May be involved in regulation of gene expression, nucleoid organization and DNA protection. This chain is Nucleoid-associated protein CGSHiEE_00780, found in Haemophilus influenzae (strain PittEE).